A 294-amino-acid polypeptide reads, in one-letter code: Ethylene-inducing xylanase 3 (294 aa).

The signal sequence occupies residues 1 to 19 (MVCFSSLFVAASAIAGVFA). Residues 31 to 226 (QSTPSSQGTH…SSGSARINVA (196 aa)) form the GH11 domain. Residue E122 is the Nucleophile of the active site. Residue E213 is the Proton donor of the active site. Residues 259 to 294 (SCAARWGQCGGSGWNGATCCSAGTCQAQNQWYSQCL) enclose the CBM1 domain.

This sequence belongs to the glycosyl hydrolase 11 (cellulase G) family.

The enzyme catalyses Endohydrolysis of (1-&gt;4)-beta-D-xylosidic linkages in xylans.. Its pathway is glycan degradation; xylan degradation. Endo-1,4-beta-xylanase involved in the hydrolysis of xylan, a major structural heterogeneous polysaccharide found in plant biomass representing the second most abundant polysaccharide in the biosphere, after cellulose. Exhibits immunity-inducing activity in Nicotiana benthamiana. Can induce strong oxidative burst, activate the expression of defense-related genes, and increase resistance against oomycete and fungal pathogens in N.benthamiana. The sequence is that of Ethylene-inducing xylanase 3 from Verticillium dahliae (strain VdLs.17 / ATCC MYA-4575 / FGSC 10137) (Verticillium wilt).